We begin with the raw amino-acid sequence, 474 residues long: PRAME family member 2 (474 aa).

The stretch at 97–124 is one LRR 1; degenerate repeat; sequence RWKLQVLDLRDVDENFWARWPGAWALSC. Residues 179 to 203 form an LRR 2; degenerate repeat; sequence HLCCSKLVNYLTPIKYLRKSLKIIY. An LRR 3; degenerate repeat occupies 204-230; that stretch reads INSIGELEIHNTCWPHLIRKLYCYLKE. An LRR 4; degenerate repeat occupies 231-265; that stretch reads MKTLCKLVFSRCHHYTSDNELEGWLVTRFTSVFLR. 5 LRR repeats span residues 266–291, 292–323, 324–342, 348–375, and 376–400; these read LEHLQLLKIKLITFFSGHLEQLIRCL, QNPLENLELTCGNLLEEDLKCLSQFPSLGYLK, HLNLSYVLLFRISLEPLGA, AASLETLVLEGCQIHYSQLSAILPGLSC, and CSQLTTFYFGSNCMSIDALKDLLRH.

Belongs to the PRAME family.

The protein is PRAME family member 2 of Homo sapiens (Human).